Here is a 428-residue protein sequence, read N- to C-terminus: 3-phosphoshikimate 1-carboxyvinyltransferase (428 aa).

3 residues coordinate 3-phosphoshikimate: Lys-22, Ser-23, and Arg-27. Residue Lys-22 coordinates phosphoenolpyruvate. Phosphoenolpyruvate is bound by residues Gly-96 and Arg-124. 3-phosphoshikimate-binding residues include Ser-170, Ser-171, Gln-172, Ser-198, Asp-314, Asn-337, and Lys-341. A phosphoenolpyruvate-binding site is contributed by Gln-172. Asp-314 functions as the Proton acceptor in the catalytic mechanism. Positions 345, 387, and 412 each coordinate phosphoenolpyruvate.

It belongs to the EPSP synthase family. In terms of assembly, monomer.

Its subcellular location is the cytoplasm. The catalysed reaction is 3-phosphoshikimate + phosphoenolpyruvate = 5-O-(1-carboxyvinyl)-3-phosphoshikimate + phosphate. It functions in the pathway metabolic intermediate biosynthesis; chorismate biosynthesis; chorismate from D-erythrose 4-phosphate and phosphoenolpyruvate: step 6/7. Catalyzes the transfer of the enolpyruvyl moiety of phosphoenolpyruvate (PEP) to the 5-hydroxyl of shikimate-3-phosphate (S3P) to produce enolpyruvyl shikimate-3-phosphate and inorganic phosphate. The chain is 3-phosphoshikimate 1-carboxyvinyltransferase from Photobacterium profundum (strain SS9).